Here is a 505-residue protein sequence, read N- to C-terminus: MDLLLLEKTLLGSFVAILVAILVSKLRGKRFKLPPGPLPVPVFGNWLQVGDDLNHRNLTDLAKKFGDILLLRMGQRNLVVVSSPELSKEVLHTQGVEFGSRTRNVVFDIFTGKGQDMVFTVYGEHWRKMRRIMTVPFFTNKVVQQYRYGWEEEAAQVVEDVKKNPGAATHGIVLRRRLQLMMYNNMYRIMFDRRFESEEDPLFNKLKALNGERSRLAQSFDYNYGDFIPILRPFLRGYLKICQEVKERRLQLFKDYFVDERKKLASTKNMCNEGLKCAIDHILDAQKKGEINEDNVLYIVENINVAAIETTLWSIEWGIAELVNHPEIQKKLRHELDTLLGPGHQITEPDTYKLPYLNAVVKETLRLRMAIPLLVPHMNLHDAKLGGFDIPAESKILVNAWWLANNPAHWKNPEEFRPERFLEEEAKVEANGNDFRYLPFGVGRRSCPGIILALPILGITLGRLVQNFELLPPPGQSKIDTSEKGGQFSLHILKHSTIVAKPRSF.

The helical transmembrane segment at 3–23 threads the bilayer; it reads LLLLEKTLLGSFVAILVAILV. Residues 213–218 and A306 each bind (E)-cinnamate; that span reads RSRLAQ. Residue C447 participates in heme binding.

It belongs to the cytochrome P450 family. The cofactor is heme.

It is found in the membrane. The catalysed reaction is (E)-cinnamate + reduced [NADPH--hemoprotein reductase] + O2 = (E)-4-coumarate + oxidized [NADPH--hemoprotein reductase] + H2O + H(+). It functions in the pathway phenylpropanoid metabolism; trans-4-coumarate biosynthesis; trans-4-coumarate from trans-cinnamate: step 1/1. Its function is as follows. Catalyzes the first oxidative step of the phenylpropanoid pathway in higher plants by transforming trans-cinnamate into p-coumarate. The compounds formed by this pathway are essential components for lignification, pollination, and defense against ultraviolet light, predators and pathogens. In Populus tremuloides (Quaking aspen), this protein is Trans-cinnamate 4-monooxygenase (CYP73A13).